Consider the following 174-residue polypeptide: Crossover junction endodeoxyribonuclease RuvC (174 aa).

Residues D8, E67, and D139 contribute to the active site. Positions 8, 67, and 139 each coordinate Mg(2+).

This sequence belongs to the RuvC family. In terms of assembly, homodimer which binds Holliday junction (HJ) DNA. The HJ becomes 2-fold symmetrical on binding to RuvC with unstacked arms; it has a different conformation from HJ DNA in complex with RuvA. In the full resolvosome a probable DNA-RuvA(4)-RuvB(12)-RuvC(2) complex forms which resolves the HJ. Mg(2+) serves as cofactor.

Its subcellular location is the cytoplasm. It carries out the reaction Endonucleolytic cleavage at a junction such as a reciprocal single-stranded crossover between two homologous DNA duplexes (Holliday junction).. Functionally, the RuvA-RuvB-RuvC complex processes Holliday junction (HJ) DNA during genetic recombination and DNA repair. Endonuclease that resolves HJ intermediates. Cleaves cruciform DNA by making single-stranded nicks across the HJ at symmetrical positions within the homologous arms, yielding a 5'-phosphate and a 3'-hydroxyl group; requires a central core of homology in the junction. The consensus cleavage sequence is 5'-(A/T)TT(C/G)-3'. Cleavage occurs on the 3'-side of the TT dinucleotide at the point of strand exchange. HJ branch migration catalyzed by RuvA-RuvB allows RuvC to scan DNA until it finds its consensus sequence, where it cleaves and resolves the cruciform DNA. In Pseudomonas entomophila (strain L48), this protein is Crossover junction endodeoxyribonuclease RuvC.